Consider the following 256-residue polypeptide: Small ribosomal subunit protein eS1 (256 aa).

Residues 1–18 (MAVGKNKRLSKGKKGLKK) are compositionally biased toward basic residues. The segment at 1-22 (MAVGKNKRLSKGKKGLKKKTQD) is disordered. Position 2 is an N-acetylalanine; partial (Ala2).

It belongs to the eukaryotic ribosomal protein eS1 family. In terms of assembly, component of the small ribosomal subunit (SSU). Mature N.crassa ribosomes consist of a small (40S) and a large (60S) subunit. The 40S small subunit contains 1 molecule of ribosomal RNA (18S rRNA) and at least 32 different proteins. The large 60S subunit contains 3 rRNA molecules (26S, 5.8S and 5S rRNA) and at least 42 different proteins.

Its subcellular location is the cytoplasm. Component of the ribosome, a large ribonucleoprotein complex responsible for the synthesis of proteins in the cell. The small ribosomal subunit (SSU) binds messenger RNAs (mRNAs) and translates the encoded message by selecting cognate aminoacyl-transfer RNA (tRNA) molecules. The large subunit (LSU) contains the ribosomal catalytic site termed the peptidyl transferase center (PTC), which catalyzes the formation of peptide bonds, thereby polymerizing the amino acids delivered by tRNAs into a polypeptide chain. The nascent polypeptides leave the ribosome through a tunnel in the LSU and interact with protein factors that function in enzymatic processing, targeting, and the membrane insertion of nascent chains at the exit of the ribosomal tunnel. This is Small ribosomal subunit protein eS1 (rps1) from Neurospora crassa (strain ATCC 24698 / 74-OR23-1A / CBS 708.71 / DSM 1257 / FGSC 987).